A 493-amino-acid chain; its full sequence is Vacuolar-processing enzyme (493 aa).

The first 34 residues, Met-1–Gly-34, serve as a signal peptide directing secretion. A propeptide spanning residues Lys-35 to Asp-53 is cleaved from the precursor. His-176 is an active-site residue. The Nucleophile role is filled by Cys-218. The cysteines at positions 251 and 265 are disulfide-linked. An N-linked (GlcNAc...) asparagine glycan is attached at Asn-318. Cystine bridges form between Cys-429–Cys-459 and Cys-441–Cys-476.

It belongs to the peptidase C13 family.

In terms of biological role, asparagine-specific endopeptidase involved in the processing of vacuolar seed protein precursors into the mature forms. This is Vacuolar-processing enzyme from Phaseolus vulgaris (Kidney bean).